Consider the following 126-residue polypeptide: SNRPMPLNRWQFKNMISCTVPSRSWWDFADYGCYCGRGGSGTPVDDLDRCCQVHDNCYNEAEKISGCNPRFRTYSYECTAGTLTCTGRNNACAASVCDCDRLAAICFAGAPYNDNNYNIDLQARCN.

Positions 1-7 (SNRPMPL) are excised as a propeptide. 7 cysteine pairs are disulfide-bonded: Cys-18-Cys-78, Cys-33-Cys-125, Cys-35-Cys-51, Cys-50-Cys-106, Cys-57-Cys-99, Cys-67-Cys-92, and Cys-85-Cys-97. Residues Tyr-34, Gly-36, and Gly-38 each coordinate Ca(2+). His-54 is a catalytic residue. Asp-55 provides a ligand contact to Ca(2+). The active site involves Asp-100.

The protein belongs to the phospholipase A2 family. Group I subfamily. D49 sub-subfamily. In terms of assembly, heterodimer formed between two homologous isoforms: isoform 1 and isoform 2. Ca(2+) serves as cofactor. Expressed by the venom gland.

Its subcellular location is the secreted. The enzyme catalyses a 1,2-diacyl-sn-glycero-3-phosphocholine + H2O = a 1-acyl-sn-glycero-3-phosphocholine + a fatty acid + H(+). PLA2 catalyzes the calcium-dependent hydrolysis of the 2-acyl groups in 3-sn-phosphoglycerides. The chain is Acidic phospholipase A2 2 from Naja sagittifera (Andaman cobra).